Here is a 247-residue protein sequence, read N- to C-terminus: Bidirectional sugar transporter SWEET1 (247 aa).

Residues 1-6 (MNIAHT) are Extracellular-facing. A helical transmembrane segment spans residues 7–27 (IFGVFGNATALFLFLAPSITF). Residues 7-94 (IFGVFGNATA…LIFLFYAPKK (88 aa)) enclose the MtN3/slv 1 domain. At 28 to 41 (KRIIKNKSTEQFSG) the chain is on the cytoplasmic side. The helical transmembrane segment at 42–62 (IPYPMTLLNCLLSAWYGLPFV) threads the bilayer. Over 63–71 (SKDNTLVST) the chain is Extracellular. Residues 72-92 (INGTGAVIETVYVLIFLFYAP) traverse the membrane as a helical segment. Residues 93–98 (KKEKIK) lie on the Cytoplasmic side of the membrane. A helical membrane pass occupies residues 99–119 (IFGIFSCVLAVFATVALVSLF). At 120–127 (ALQGNGRK) the chain is on the extracellular side. The chain crosses the membrane as a helical span at residues 128 to 148 (LFCGLAATVFSIIMYASPLSI). In terms of domain architecture, MtN3/slv 2 spans 130 to 213 (CGLAATVFSI…ILYFIYCGNK (84 aa)). The Cytoplasmic portion of the chain corresponds to 149–162 (MRLVVKTKSVEFMP). A helical transmembrane segment spans residues 163-183 (FFLSLFVFLCGTSWFVYGLIG). The Extracellular segment spans residues 184 to 187 (RDPF). A helical transmembrane segment spans residues 188-208 (VAIPNGFGCALGTLQLILYFI). Residues 209–247 (YCGNKGEKSADAQKDEKSVEMKDDEKKQNVVNGKQDLQV) lie on the Cytoplasmic side of the membrane. Residues 221-236 (QKDEKSVEMKDDEKKQ) show a composition bias toward basic and acidic residues. The interval 221 to 247 (QKDEKSVEMKDDEKKQNVVNGKQDLQV) is disordered. The segment covering 237–247 (NVVNGKQDLQV) has biased composition (polar residues).

The protein belongs to the SWEET sugar transporter family. Forms homooligomers and heterooligomers with SWEET9, SWEET11, SWEET13, SWEET15, SWEET16 and SWEET17. Mainly expressed in flowers.

The protein resides in the cell membrane. It localises to the endoplasmic reticulum membrane. Mediates both low-affinity uptake and efflux of sugar across the plasma membrane. Can transport glucose, and, to a lower extent, mannose, fructose and galactose. The chain is Bidirectional sugar transporter SWEET1 from Arabidopsis thaliana (Mouse-ear cress).